The sequence spans 372 residues: 4-hydroxy-3-methylbut-2-en-1-yl diphosphate synthase (flavodoxin) (372 aa).

[4Fe-4S] cluster is bound by residues C270, C273, C305, and E312.

It belongs to the IspG family. It depends on [4Fe-4S] cluster as a cofactor.

The enzyme catalyses (2E)-4-hydroxy-3-methylbut-2-enyl diphosphate + oxidized [flavodoxin] + H2O + 2 H(+) = 2-C-methyl-D-erythritol 2,4-cyclic diphosphate + reduced [flavodoxin]. It participates in isoprenoid biosynthesis; isopentenyl diphosphate biosynthesis via DXP pathway; isopentenyl diphosphate from 1-deoxy-D-xylulose 5-phosphate: step 5/6. Converts 2C-methyl-D-erythritol 2,4-cyclodiphosphate (ME-2,4cPP) into 1-hydroxy-2-methyl-2-(E)-butenyl 4-diphosphate. This is 4-hydroxy-3-methylbut-2-en-1-yl diphosphate synthase (flavodoxin) from Shigella dysenteriae serotype 1 (strain Sd197).